Here is a 385-residue protein sequence, read N- to C-terminus: MNKWHINKWYFFVGMLVIFAVIISLILKDTSLTFSSYDREKFPHLIGNSMVKKPSLAGRLKIIEIDGRKTLGDQHGNPIQLRGMSTHGLQWFPQIINNNAFSALSKDWEANVIRLAMYVGEGGYSTDPSVKEKVIEGINLAIKNDMYVIVDWHILNPGDPNAKIYSGAKEFFKEIASKYPNDLHIIYELANEPNPTESDITNDIAGWEKVKKYAEPIIKMLRDMGNENIIIVGNPEWSTRPDLAVNDPIDDKNVMYSAHFYTGSASVWENGNKGHIARNIEKALENGLTVFVTEWGTSEASGDGGPYLNEADEWLEFLNSNNISWVNWSLANKNEASAAFLPTTSLDPGNGKVWAVNQLSLSGEYVRARIKGIPYKPISRETMGK.

The chain crosses the membrane as a helical span at residues 6–26 (INKWYFFVGMLVIFAVIISLI). Substrate is bound by residues H87, 91–92 (WF), Y118, and H153. The Proton donor role is filled by E192. Y261 lines the substrate pocket. E294 acts as the Nucleophile in catalysis. Substrate contacts are provided by residues 300 to 301 (AS), W328, and 333 to 335 (KNE).

It belongs to the glycosyl hydrolase 5 (cellulase A) family. As to quaternary structure, monomer.

Its subcellular location is the cell membrane. It catalyses the reaction Endohydrolysis of (1-&gt;4)-beta-D-glucosidic linkages in cellulose, lichenin and cereal beta-D-glucans.. Its activity is regulated as follows. Activity is enhanced by 1mM Mn(2+), but is not affected by 1mM Ca(2+), Mg(2+), Zn(2+), K(+), Na(+) or Li(+). Activity is not inhibited by EDTA (in vitro). Its function is as follows. Thermostable endoglucanase that has high activity with soluble polymeric substrates containing beta-1,4-glycosidic bonds, such as carboxymethyl cellulose (CMC) and barley beta-D-glucan (in vitro). Has no activity with cellobiose and filter paper. Has no activity with substrates containing beta-1,3-linked glycans, such as laminarin. Likewise, lacks activity with xylan, galactomannan and pectin. This chain is Cellulase CelDZ1, found in Thermoanaerobacterium sp.